We begin with the raw amino-acid sequence, 140 residues long: UPF0102 protein alr1796 (140 aa).

It belongs to the UPF0102 family.

This chain is UPF0102 protein alr1796, found in Nostoc sp. (strain PCC 7120 / SAG 25.82 / UTEX 2576).